Here is a 184-residue protein sequence, read N- to C-terminus: Acireductone dioxygenase (184 aa).

Fe(2+)-binding residues include His87, His89, Glu93, and His137. The Ni(2+) site is built by His87, His89, Glu93, and His137.

Belongs to the acireductone dioxygenase (ARD) family. The cofactor is Fe(2+). Ni(2+) serves as cofactor.

It is found in the cytoplasm. The protein resides in the nucleus. The catalysed reaction is 1,2-dihydroxy-5-(methylsulfanyl)pent-1-en-3-one + O2 = 4-methylsulfanyl-2-oxobutanoate + formate + 2 H(+). It catalyses the reaction 1,2-dihydroxy-5-(methylsulfanyl)pent-1-en-3-one + O2 = 3-(methylsulfanyl)propanoate + CO + formate + 2 H(+). The protein operates within amino-acid biosynthesis; L-methionine biosynthesis via salvage pathway; L-methionine from S-methyl-5-thio-alpha-D-ribose 1-phosphate: step 5/6. In terms of biological role, catalyzes 2 different reactions between oxygen and the acireductone 1,2-dihydroxy-3-keto-5-methylthiopentene (DHK-MTPene) depending upon the metal bound in the active site. Fe-containing acireductone dioxygenase (Fe-ARD) produces formate and 2-keto-4-methylthiobutyrate (KMTB), the alpha-ketoacid precursor of methionine in the methionine recycle pathway. Ni-containing acireductone dioxygenase (Ni-ARD) produces methylthiopropionate, carbon monoxide and formate, and does not lie on the methionine recycle pathway. The polypeptide is Acireductone dioxygenase (Ciona intestinalis (Transparent sea squirt)).